The primary structure comprises 632 residues: MTHEFTESYDVIVIGAGHAGVEASLATSRMGCKTLLATINLDMLAFMPCNPSIGGSAKGIVVREIDALGGEMGKNIDKTYIQMKMLNTGKGPAVRALRAQADKSLYAREMKHTVEKQANLTLRQTMIDDILVEDGRVVGVLTATGQKFAAKAVVVTTGTALRGEIILGELKYSSGPNNSLASVTLADNLKKLGLEIGRFKTGTPPRVKASSINYDQTEIQPGDDKPNHFSFMSKDADYLKDQIPCWLTYTNQTSHDIINQNLYRAPMFSGIVKGVGPRYCPSIEDKIVRFADKERHQLFLEPEGRDTEEVYVQGLSTSLPEDVQKDLIHSIKGLEKAEMMRTGYAIEYDIVLPHQLRATLETKLISGLFTAGQTNGTSGYEEAAGQGLIAGINAALKVQGKPELILKRSDAYIGVMIDDLVTKGTLEPYRLLTSRAEYRLILRHDNADMRLTEIGRDIGLVDDERWKAFEIKKNQFDNELKRLNSIKLKPIKETNDRVQDLGFKPLTDAMTAKEFMRRPEIDYATAVSFVGPAAEDLDAKIIELLETEIKYEGYIRKALDQVAKMKRMEEKRIPTNIDWDAIDSIATEARQKFKKINPETIGQASRISGVNPADISILMIYLEGNGKAHRKY.

Residues 15–20 (GAGHAG), isoleucine 127, and serine 182 contribute to the FAD site. 276–290 (GPRYCPSIEDKIVRF) is a binding site for NAD(+). Residue glutamine 373 participates in FAD binding.

This sequence belongs to the MnmG family. In terms of assembly, homodimer. Heterotetramer of two MnmE and two MnmG subunits. It depends on FAD as a cofactor.

It localises to the cytoplasm. In terms of biological role, NAD-binding protein involved in the addition of a carboxymethylaminomethyl (cmnm) group at the wobble position (U34) of certain tRNAs, forming tRNA-cmnm(5)s(2)U34. This Streptococcus pyogenes serotype M1 protein is tRNA uridine 5-carboxymethylaminomethyl modification enzyme MnmG.